We begin with the raw amino-acid sequence, 389 residues long: Phospho-N-acetylmuramoyl-pentapeptide-transferase (389 aa).

10 consecutive transmembrane segments (helical) span residues 25-45, 73-93, 97-117, 135-155, 190-210, 222-242, 259-279, 287-307, 311-331, and 366-386; these read RAVM…PAVI, TMGG…WADL, FIWI…VDDY, FWQS…VSEA, ISYP…IVGA, GLVI…AYVM, AGEL…FLWF, FMGD…AVIV, IVLF…MLQV, and QVVV…LSTL.

This sequence belongs to the glycosyltransferase 4 family. MraY subfamily. It depends on Mg(2+) as a cofactor.

It is found in the cell inner membrane. The catalysed reaction is UDP-N-acetyl-alpha-D-muramoyl-L-alanyl-gamma-D-glutamyl-meso-2,6-diaminopimeloyl-D-alanyl-D-alanine + di-trans,octa-cis-undecaprenyl phosphate = di-trans,octa-cis-undecaprenyl diphospho-N-acetyl-alpha-D-muramoyl-L-alanyl-D-glutamyl-meso-2,6-diaminopimeloyl-D-alanyl-D-alanine + UMP. It functions in the pathway cell wall biogenesis; peptidoglycan biosynthesis. Catalyzes the initial step of the lipid cycle reactions in the biosynthesis of the cell wall peptidoglycan: transfers peptidoglycan precursor phospho-MurNAc-pentapeptide from UDP-MurNAc-pentapeptide onto the lipid carrier undecaprenyl phosphate, yielding undecaprenyl-pyrophosphoryl-MurNAc-pentapeptide, known as lipid I. The chain is Phospho-N-acetylmuramoyl-pentapeptide-transferase from Paraburkholderia xenovorans (strain LB400).